A 328-amino-acid polypeptide reads, in one-letter code: UPF0421 protein SAR1980 (328 aa).

The next 4 membrane-spanning stretches (helical) occupy residues 19 to 39, 61 to 81, 108 to 128, and 132 to 152; these read IAIF…IYAI, LPAT…FGDQ, VAVL…IFNF, and TLTA…VFPP.

This sequence belongs to the UPF0421 family.

Its subcellular location is the cell membrane. The polypeptide is UPF0421 protein SAR1980 (Staphylococcus aureus (strain MRSA252)).